Reading from the N-terminus, the 278-residue chain is Pantothenate synthetase (278 aa).

31–38 is an ATP binding site; the sequence is MGALHEGH. The active-site Proton donor is H38. Q62 contacts (R)-pantoate. A beta-alanine-binding site is contributed by Q62. 148-151 is an ATP binding site; it reads GEKD. Q154 provides a ligand contact to (R)-pantoate. Residues L177 and 185–188 contribute to the ATP site; that span reads MSSR.

It belongs to the pantothenate synthetase family. As to quaternary structure, homodimer.

Its subcellular location is the cytoplasm. The catalysed reaction is (R)-pantoate + beta-alanine + ATP = (R)-pantothenate + AMP + diphosphate + H(+). Its pathway is cofactor biosynthesis; (R)-pantothenate biosynthesis; (R)-pantothenate from (R)-pantoate and beta-alanine: step 1/1. Catalyzes the condensation of pantoate with beta-alanine in an ATP-dependent reaction via a pantoyl-adenylate intermediate. This chain is Pantothenate synthetase, found in Acidiphilium cryptum (strain JF-5).